We begin with the raw amino-acid sequence, 558 residues long: CTP synthase (558 aa).

The tract at residues 1–270 (MTKYVFVTGG…DDLICRELDL (270 aa)) is amidoligase domain. Serine 13 is a binding site for CTP. Serine 13 contacts UTP. ATP is bound by residues 14-19 (SLGKGI) and aspartate 71. Mg(2+)-binding residues include aspartate 71 and glutamate 144. CTP is bound by residues 151–153 (DIE), 191–196 (KTKPTQ), and lysine 227. Residues 191 to 196 (KTKPTQ) and lysine 227 contribute to the UTP site. The Glutamine amidotransferase type-1 domain maps to 295-547 (TIGMVGKYVE…ISAALEHQKK (253 aa)). Glycine 356 contributes to the L-glutamine binding site. Cysteine 383 serves as the catalytic Nucleophile; for glutamine hydrolysis. Residues 384 to 387 (LGMQ), glutamate 407, and arginine 473 each bind L-glutamine. Residues histidine 520 and glutamate 522 contribute to the active site.

The protein belongs to the CTP synthase family. Homotetramer.

It carries out the reaction UTP + L-glutamine + ATP + H2O = CTP + L-glutamate + ADP + phosphate + 2 H(+). The enzyme catalyses L-glutamine + H2O = L-glutamate + NH4(+). It catalyses the reaction UTP + NH4(+) + ATP = CTP + ADP + phosphate + 2 H(+). It functions in the pathway pyrimidine metabolism; CTP biosynthesis via de novo pathway; CTP from UDP: step 2/2. Its activity is regulated as follows. Allosterically activated by GTP, when glutamine is the substrate; GTP has no effect on the reaction when ammonia is the substrate. The allosteric effector GTP functions by stabilizing the protein conformation that binds the tetrahedral intermediate(s) formed during glutamine hydrolysis. Inhibited by the product CTP, via allosteric rather than competitive inhibition. In terms of biological role, catalyzes the ATP-dependent amination of UTP to CTP with either L-glutamine or ammonia as the source of nitrogen. Regulates intracellular CTP levels through interactions with the four ribonucleotide triphosphates. This chain is CTP synthase, found in Polynucleobacter necessarius subsp. necessarius (strain STIR1).